We begin with the raw amino-acid sequence, 116 residues long: Ferredoxin (116 aa).

2 4Fe-4S ferredoxin-type domains span residues 2-31 (TYVV…EGER) and 35-64 (FMLV…PESP). The [3Fe-4S] cluster site is built by Cys9 and Cys17. The [4Fe-4S] cluster site is built by Cys21, Cys44, Cys47, and Cys50. Cys54 is a [3Fe-4S] cluster binding site.

It depends on [4Fe-4S] cluster as a cofactor. Requires [3Fe-4S] cluster as cofactor.

Ferredoxins are iron-sulfur proteins that transfer electrons in a wide variety of metabolic reactions. In Rickettsia conorii (strain ATCC VR-613 / Malish 7), this protein is Ferredoxin (fdxA).